A 276-amino-acid chain; its full sequence is 2,3,4,5-tetrahydropyridine-2,6-dicarboxylate N-succinyltransferase (276 aa).

The substrate site is built by R104 and D141.

The protein belongs to the transferase hexapeptide repeat family. Homotrimer.

The protein resides in the cytoplasm. The catalysed reaction is (S)-2,3,4,5-tetrahydrodipicolinate + succinyl-CoA + H2O = (S)-2-succinylamino-6-oxoheptanedioate + CoA. It participates in amino-acid biosynthesis; L-lysine biosynthesis via DAP pathway; LL-2,6-diaminopimelate from (S)-tetrahydrodipicolinate (succinylase route): step 1/3. This Legionella pneumophila (strain Paris) protein is 2,3,4,5-tetrahydropyridine-2,6-dicarboxylate N-succinyltransferase.